Here is a 457-residue protein sequence, read N- to C-terminus: NADH-ubiquinone oxidoreductase chain 4 (457 aa).

12 helical membrane-spanning segments follow: residues 22–42, 59–79, 95–115, 116–136, 148–168, 191–211, 223–243, 257–277, 282–302, 309–329, 350–370, and 433–453; these read NLWP…IALI, SMQL…LIAS, IVLV…LELI, LFYI…TRWG, FIFY…ALYF, LTVW…IYGF, PVAG…YGLM, SSLP…IICI, LKAL…AGVF, INGA…LFAL, LILP…LGFP, and LFLL…LVLI.

The protein belongs to the complex I subunit 4 family.

It is found in the mitochondrion membrane. The catalysed reaction is a ubiquinone + NADH + 5 H(+)(in) = a ubiquinol + NAD(+) + 4 H(+)(out). Its function is as follows. Core subunit of the mitochondrial membrane respiratory chain NADH dehydrogenase (Complex I) that is believed to belong to the minimal assembly required for catalysis. Complex I functions in the transfer of electrons from NADH to the respiratory chain. The immediate electron acceptor for the enzyme is believed to be ubiquinone. This Arbacia lixula (Black urchin) protein is NADH-ubiquinone oxidoreductase chain 4 (ND4).